The primary structure comprises 223 residues: Translation initiation factor 6 (223 aa).

The protein belongs to the eIF-6 family.

Its function is as follows. Binds to the 50S ribosomal subunit and prevents its association with the 30S ribosomal subunit to form the 70S initiation complex. This Thermofilum pendens (strain DSM 2475 / Hrk 5) protein is Translation initiation factor 6.